The sequence spans 146 residues: Hemoglobin subunit beta (146 aa).

An N-acetylvaline modification is found at valine 1. A Globin domain is found at 2–146 (HLTDAEKAAI…VASALAHKYH (145 aa)). A heme b-binding site is contributed by histidine 63. N6-acetyllysine is present on lysine 82. Residue histidine 92 participates in heme b binding. S-nitrosocysteine is present on cysteine 93. Lysine 144 carries the N6-acetyllysine modification.

This sequence belongs to the globin family. As to quaternary structure, heterotetramer of two alpha chains and two beta chains. As to expression, red blood cells.

Its function is as follows. Involved in oxygen transport from the lung to the various peripheral tissues. This Microtus xanthognathus (Yellow-cheeked vole) protein is Hemoglobin subunit beta (HBB).